The following is a 23-amino-acid chain: Large ribosomal subunit protein uL10 (23 aa).

The protein belongs to the universal ribosomal protein uL10 family. In terms of assembly, part of the ribosomal stalk of the 50S ribosomal subunit. The N-terminus interacts with L11 and the large rRNA to form the base of the stalk. The C-terminus forms an elongated spine to which L12 dimers bind in a sequential fashion forming a multimeric L10(L12)X complex.

Its function is as follows. Forms part of the ribosomal stalk, playing a central role in the interaction of the ribosome with GTP-bound translation factors. The chain is Large ribosomal subunit protein uL10 (rplJ) from Klebsiella pneumoniae.